The sequence spans 495 residues: Probable serine/threonine-protein kinase DDB_G0292354 (495 aa).

One can recognise a Protein kinase domain in the interval W16–L275. ATP is bound by residues I22–I30 and K45. D136 (proton acceptor) is an active-site residue. The interval E293–I469 is disordered. 2 stretches are compositionally biased toward low complexity: residues Q295–A333 and N354–N364. Polar residues predominate over residues E385–E395. A compositionally biased stretch (low complexity) spans S435–S466.

The protein belongs to the protein kinase superfamily. CK1 Ser/Thr protein kinase family.

This chain is Probable serine/threonine-protein kinase DDB_G0292354, found in Dictyostelium discoideum (Social amoeba).